Consider the following 378-residue polypeptide: Probable pectin lyase A (378 aa).

Residues 1-19 (MKFPAFITAIISIASLSSA) form the signal peptide. Cystine bridges form between Cys-82-Cys-101 and Cys-91-Cys-225. Arg-255 is a catalytic residue. A disulfide bridge connects residues Cys-321 and Cys-329.

The protein belongs to the polysaccharide lyase 1 family.

It is found in the secreted. It carries out the reaction Eliminative cleavage of (1-&gt;4)-alpha-D-galacturonan methyl ester to give oligosaccharides with 4-deoxy-6-O-methyl-alpha-D-galact-4-enuronosyl groups at their non-reducing ends.. In terms of biological role, pectinolytic enzymes consist of four classes of enzymes: pectin lyase, polygalacturonase, pectin methylesterase and rhamnogalacturonase. Among pectinolytic enzymes, pectin lyase is the most important in depolymerization of pectin, since it cleaves internal glycosidic bonds of highly methylated pectins. The sequence is that of Probable pectin lyase A (pelA) from Aspergillus terreus (strain NIH 2624 / FGSC A1156).